A 208-amino-acid chain; its full sequence is Ribosomal RNA large subunit methyltransferase E (208 aa).

Residues Gly-62, Trp-64, Asp-82, Asp-98, and Asp-123 each coordinate S-adenosyl-L-methionine. Residue Lys-163 is the Proton acceptor of the active site.

The protein belongs to the class I-like SAM-binding methyltransferase superfamily. RNA methyltransferase RlmE family.

Its subcellular location is the cytoplasm. It carries out the reaction uridine(2552) in 23S rRNA + S-adenosyl-L-methionine = 2'-O-methyluridine(2552) in 23S rRNA + S-adenosyl-L-homocysteine + H(+). Functionally, specifically methylates the uridine in position 2552 of 23S rRNA at the 2'-O position of the ribose in the fully assembled 50S ribosomal subunit. The polypeptide is Ribosomal RNA large subunit methyltransferase E (Mannheimia succiniciproducens (strain KCTC 0769BP / MBEL55E)).